Consider the following 313-residue polypeptide: Homoserine O-succinyltransferase (313 aa).

Cys-142 serves as the catalytic Acyl-thioester intermediate. Positions 163 and 192 each coordinate substrate. Catalysis depends on His-235, which acts as the Proton acceptor. The active site involves Glu-237. Arg-249 is a binding site for substrate.

This sequence belongs to the MetA family.

It is found in the cytoplasm. It carries out the reaction L-homoserine + succinyl-CoA = O-succinyl-L-homoserine + CoA. Its pathway is amino-acid biosynthesis; L-methionine biosynthesis via de novo pathway; O-succinyl-L-homoserine from L-homoserine: step 1/1. Its function is as follows. Transfers a succinyl group from succinyl-CoA to L-homoserine, forming succinyl-L-homoserine. The protein is Homoserine O-succinyltransferase of Shewanella sp. (strain ANA-3).